Consider the following 261-residue polypeptide: Cytochrome c oxidase subunit 3 (261 aa).

The Mitochondrial matrix segment spans residues 1–15; sequence MTHQSHAYHMVKPSP. A helical membrane pass occupies residues 16–34; it reads WPLTGALSALLMTSGLAMW. At 35–40 the chain is on the mitochondrial intermembrane side; that stretch reads FHFHSM. A helical transmembrane segment spans residues 41–66; sequence TLLMLGLLTNTLTMYQWWRDVTREST. Residues 67–72 lie on the Mitochondrial matrix side of the membrane; that stretch reads YQGHHT. Residues 73–105 form a helical membrane-spanning segment; sequence PPVQKGLRYGMILFITSEVFFFAGFFWAFYHSS. Over 106 to 128 the chain is Mitochondrial intermembrane; the sequence is LAPTPQLGGHWPPTGITPLNPLE. The chain crosses the membrane as a helical span at residues 129–152; it reads VPLLNTSVLLASGVSITWAHHSLM. At 153–155 the chain is on the mitochondrial matrix side; sequence ENN. Residues 156–183 form a helical membrane-spanning segment; sequence RNQMIQALLITILLGLYFTLLQASEYFE. Topologically, residues 184 to 190 are mitochondrial intermembrane; the sequence is SPFTISD. Residues 191–223 form a helical membrane-spanning segment; it reads GIYGSTFFVATGFHGLHVIIGSTFLTICFIRQL. The Mitochondrial matrix segment spans residues 224–232; it reads MFHFTSKHH. A helical transmembrane segment spans residues 233–256; it reads FGFEAAAWYWHFVDVVWLFLYVSI. Over 257–261 the chain is Mitochondrial intermembrane; sequence YWWGS.

Belongs to the cytochrome c oxidase subunit 3 family. In terms of assembly, component of the cytochrome c oxidase (complex IV, CIV), a multisubunit enzyme composed of 14 subunits. The complex is composed of a catalytic core of 3 subunits MT-CO1, MT-CO2 and MT-CO3, encoded in the mitochondrial DNA, and 11 supernumerary subunits COX4I1 (or COX4I2), COX5A, COX5B, COX6A1 (or COX6A2), COX6B1 (or COX6B2), COX6C, COX7A2 (or COX7A1), COX7B, COX7C, COX8A and NDUFA4, which are encoded in the nuclear genome. The complex exists as a monomer or a dimer and forms supercomplexes (SCs) in the inner mitochondrial membrane with NADH-ubiquinone oxidoreductase (complex I, CI) and ubiquinol-cytochrome c oxidoreductase (cytochrome b-c1 complex, complex III, CIII), resulting in different assemblies (supercomplex SCI(1)III(2)IV(1) and megacomplex MCI(2)III(2)IV(2)).

It localises to the mitochondrion inner membrane. It catalyses the reaction 4 Fe(II)-[cytochrome c] + O2 + 8 H(+)(in) = 4 Fe(III)-[cytochrome c] + 2 H2O + 4 H(+)(out). Component of the cytochrome c oxidase, the last enzyme in the mitochondrial electron transport chain which drives oxidative phosphorylation. The respiratory chain contains 3 multisubunit complexes succinate dehydrogenase (complex II, CII), ubiquinol-cytochrome c oxidoreductase (cytochrome b-c1 complex, complex III, CIII) and cytochrome c oxidase (complex IV, CIV), that cooperate to transfer electrons derived from NADH and succinate to molecular oxygen, creating an electrochemical gradient over the inner membrane that drives transmembrane transport and the ATP synthase. Cytochrome c oxidase is the component of the respiratory chain that catalyzes the reduction of oxygen to water. Electrons originating from reduced cytochrome c in the intermembrane space (IMS) are transferred via the dinuclear copper A center (CU(A)) of subunit 2 and heme A of subunit 1 to the active site in subunit 1, a binuclear center (BNC) formed by heme A3 and copper B (CU(B)). The BNC reduces molecular oxygen to 2 water molecules using 4 electrons from cytochrome c in the IMS and 4 protons from the mitochondrial matrix. This chain is Cytochrome c oxidase subunit 3 (MT-CO3), found in Homo sapiens (Human).